We begin with the raw amino-acid sequence, 182 residues long: MIKFSIRGENIEVTEAIRDYVESKLTKIEKYFAKDQEIDARVNLKVYRERSSKVEVTIPLDSVTLRAEDVSQDMYGSIDLVVDKIERQIRKNKTKIAKKHREKVPTGQVFTTEFEAEEVDEIPEVQVVRTKNVTLKPMDVEEARLQMELLGHDFFIYTDSEDGATNILYRREDGNLGLIEAK.

It belongs to the HPF/YfiA ribosome-associated protein family. Long HPF subfamily. In terms of assembly, interacts with 100S ribosomes.

The protein resides in the cytoplasm. In terms of biological role, required for dimerization of active 70S ribosomes into 100S ribosomes in stationary phase; 100S ribosomes are translationally inactive and sometimes present during exponential growth. The chain is Ribosome hibernation promotion factor from Streptococcus pyogenes serotype M6 (strain ATCC BAA-946 / MGAS10394).